Here is a 163-residue protein sequence, read N- to C-terminus: Photosystem II extrinsic protein V (163 aa).

The signal sequence occupies residues 1–26; sequence MFKKSSQLFSLVFFTIFSIFIGTASA. Cys-63, Cys-66, His-67, and Met-130 together coordinate heme c.

It belongs to the cytochrome c family. PsbV subfamily. As to quaternary structure, PSII is composed of 1 copy each of membrane proteins PsbA, PsbB, PsbC, PsbD, PsbE, PsbF, PsbH, PsbI, PsbJ, PsbK, PsbL, PsbM, PsbT, PsbY, PsbZ, Psb30/Ycf12, at least 3 peripheral proteins of the oxygen-evolving complex and a large number of cofactors. It forms dimeric complexes. Heme c is required as a cofactor.

The protein localises to the plastid. Its subcellular location is the chloroplast thylakoid membrane. In terms of biological role, one of the extrinsic, lumenal subunits of photosystem II (PSII). PSII is a light-driven water plastoquinone oxidoreductase, using light energy to abstract electrons from H(2)O, generating a proton gradient subsequently used for ATP formation. The extrinsic proteins stabilize the structure of photosystem II oxygen-evolving complex (OEC), the ion environment of oxygen evolution and protect the OEC against heat-induced inactivation. The polypeptide is Photosystem II extrinsic protein V (Phaeodactylum tricornutum (strain CCAP 1055/1)).